We begin with the raw amino-acid sequence, 342 residues long: MDRELIEICKENSATAFSVGYQIVYLIYVVLSVTSIFTCSYFIKTFIWNSTFHPNFKLLLTMYFFAAIFHSFLFTASYLMMIERFLDYQTDCDIHVSMVPYAIVHSSIACCLFCGMLTQVFMVIERLLATIKIESYEHNTSFWHILAYLFFCIVLPLSLLVWAYQDADYNSPVITAISPPKGVEIRLNILYIFCFFLAILALILLQVVRFVNKRRESRIEISLSGRFQIVENIDTTTFISSILIINMIMSVIYIVGTFTLRNFQFDAFINNQPALATVKTIFYLHPLFSFLMPLISSYHLSKMRERRVKRREHLMAIKTKGREGSDAYNQLLHDQWTQHFLK.

The Extracellular portion of the chain corresponds to 1-22 (MDRELIEICKENSATAFSVGYQ). A helical membrane pass occupies residues 23-43 (IVYLIYVVLSVTSIFTCSYFI). Residues 44–61 (KTFIWNSTFHPNFKLLLT) are Cytoplasmic-facing. The chain crosses the membrane as a helical span at residues 62-82 (MYFFAAIFHSFLFTASYLMMI). Residues 83-102 (ERFLDYQTDCDIHVSMVPYA) are Extracellular-facing. A helical transmembrane segment spans residues 103–123 (IVHSSIACCLFCGMLTQVFMV). Residues 124–141 (IERLLATIKIESYEHNTS) lie on the Cytoplasmic side of the membrane. The helical transmembrane segment at 142–162 (FWHILAYLFFCIVLPLSLLVW) threads the bilayer. At 163–187 (AYQDADYNSPVITAISPPKGVEIRL) the chain is on the extracellular side. A helical transmembrane segment spans residues 188 to 208 (NILYIFCFFLAILALILLQVV). At 209–237 (RFVNKRRESRIEISLSGRFQIVENIDTTT) the chain is on the cytoplasmic side. Residues 238 to 258 (FISSILIINMIMSVIYIVGTF) form a helical membrane-spanning segment. Residues 259 to 274 (TLRNFQFDAFINNQPA) are Extracellular-facing. The chain crosses the membrane as a helical span at residues 275-295 (LATVKTIFYLHPLFSFLMPLI). Over 296-342 (SSYHLSKMRERRVKRREHLMAIKTKGREGSDAYNQLLHDQWTQHFLK) the chain is Cytoplasmic.

It belongs to the nematode receptor-like protein srb family. As to expression, expressed throughout the nervous system, in pharyngeal muscle, hermaphrodite vulval muscles and in the male tail. Not expressed in male somatic gonads or sperm.

It is found in the cell membrane. Its subcellular location is the perikaryon. The protein resides in the cell projection. It localises to the dendrite. Functionally, G-protein coupled receptor. Plays a role in the navigational capacity of sperm and promotes the targeting of sperm derived from males to the fertilization site in the uterus of hermaphrodites. The protein is Serpentine receptor class beta-16 of Caenorhabditis elegans.